Reading from the N-terminus, the 172-residue chain is Ribosome maturation factor RimM (172 aa).

The 74-residue stretch at 95-168 (DEGEFYYHQI…RVDVAIMEGL (74 aa)) folds into the PRC barrel domain.

Belongs to the RimM family. As to quaternary structure, binds ribosomal protein uS19.

Its subcellular location is the cytoplasm. Its function is as follows. An accessory protein needed during the final step in the assembly of 30S ribosomal subunit, possibly for assembly of the head region. Essential for efficient processing of 16S rRNA. May be needed both before and after RbfA during the maturation of 16S rRNA. It has affinity for free ribosomal 30S subunits but not for 70S ribosomes. The sequence is that of Ribosome maturation factor RimM from Streptococcus uberis (strain ATCC BAA-854 / 0140J).